A 130-amino-acid chain; its full sequence is Cysteine methyltransferase (130 aa).

It catalyses the reaction [trehalose-6-phosphate synthase]-L-cysteine + S-adenosyl-L-methionine = [trehalose-6-phosphate synthase]-S-methyl-L-cysteine + S-adenosyl-L-homocysteine + H(+). In terms of biological role, S-adenosyl-L-methionine-dependent protein-cysteine S-methyltransferase with broad substrate specificity. Methylates trehalose-6-phosphate synthase (TPS), enhancing its enzymatic activity and promoting trehalose synthesis upon entry of cells into stationary phase. This chain is Cysteine methyltransferase, found in Saccharomyces cerevisiae (Baker's yeast).